We begin with the raw amino-acid sequence, 564 residues long: M protein, serotype 12 (564 aa).

Positions 1 to 41 (MAKNTTNRHYSLRKLKTGTASVAVALTVVGAGLVAGQTVRA) are cleaved as a signal peptide. Residues 44 to 505 (SDLVAEKQRL…RAGKASDSQT (462 aa)) are a coiled coil. C repeat units lie at residues 285-319 (KQLE…EAEL), 327-361 (AKVT…VEAA), 363-397 (KQLE…EKDL), and 405-439 (DKVK…EKAL). 2 disordered regions span residues 372 to 391 (SEAS…EAKK) and 404 to 438 (LDKV…VEKA). Composition is skewed to basic and acidic residues over residues 404-413 (LDKVKEEKQI) and 421-438 (LRRD…VEKA). 4 D repeats span residues 472–477 (AKLEAE), 478–483 (AKALKE), 486–491 (AKQAEE), and 493–498 (AKLRAG). The interval 493-550 (AKLRAGKASDSQTPDAKPGNKAVPGKGQAPQAGTKPNQNKAPMKETKRQLPSTGETAN) is disordered. Positions 542 to 546 (LPSTG) match the LPXTG sorting signal motif. At Thr-545 the chain carries Pentaglycyl murein peptidoglycan amidated threonine. Positions 546–564 (GETANPFFTAAALTVMAAA) are cleaved as a propeptide — removed by sortase.

Belongs to the M protein family.

Its subcellular location is the secreted. It localises to the cell wall. In terms of biological role, this protein is one of the different antigenic serotypes of protein M. Protein M is closely associated with virulence of the bacterium and can render the organism resistant to phagocytosis. In Streptococcus pyogenes, this protein is M protein, serotype 12 (emm12).